Consider the following 228-residue polypeptide: CD9 antigen (228 aa).

The Cytoplasmic segment spans residues 1–12; the sequence is MPVKGGTKCIKY. Cysteine 9 carries the S-palmitoyl cysteine lipid modification. A helical transmembrane segment spans residues 13 to 33; the sequence is LLFGFNFIFWLAGIAVLAIGL. Over 34-55 the chain is Extracellular; the sequence is WLRFDSQTKSIFEQETNNNNSS. 2 N-linked (GlcNAc...) asparagine glycosylation sites follow: asparagine 52 and asparagine 53. Residues 56–76 form a helical membrane-spanning segment; that stretch reads FYTGVYILIGAGALMMLVGFL. Over 77 to 87 the chain is Cytoplasmic; sequence GCCGAVQESQC. 3 S-palmitoyl cysteine lipidation sites follow: cysteine 78, cysteine 79, and cysteine 87. Residues 88–111 form a helical membrane-spanning segment; it reads MLGLFFGFLLVIFAIEIAAAIWGY. Residues 112-195 lie on the Extracellular side of the membrane; the sequence is SHKDEVIKEV…KEVFDNKFHI (84 aa). 2 disulfides stabilise this stretch: cysteine 152–cysteine 181 and cysteine 153–cysteine 167. Residues 196–221 traverse the membrane as a helical segment; that stretch reads IGAVGIGIAVVMIFGMIFSMILCCAI. S-palmitoyl cysteine attachment occurs at residues cysteine 218 and cysteine 219. The Cytoplasmic segment spans residues 222–228; that stretch reads RRNREMV.

Belongs to the tetraspanin (TM4SF) family. Forms both disulfide-linked homodimers and higher homooligomers as well as heterooligomers with other members of the tetraspanin family. Interacts (via the second extracellular domain) with integrin ITGAV:ITGB3. Interacts with integrin ITGA6:ITGB1; interaction takes place in oocytes and is involved in sperm-egg fusion. Part of integrin-tetraspanin complexes composed of CD81, beta-1 and beta-2 integrins in the membrane of monocyte/macrophages. Interacts with CD63; identified in a complex with CD63 and ITGB3. Associates with CR2/CD21 and with PTGFRN/CD9P1. Part of a complex composed of CD9, CD81, PTGFRN and IGSF8. Interacts directly with IGSF8. Interacts with PDPN; this interaction is homophilic and attenuates platelet aggregation and pulmonary metastasis induced by PDPN. Interacts (on T cell side) with CD81 at immunological synapses between antigen-presenting cells and T cells. In terms of processing, palmitoylated at a low, basal level in unstimulated platelets. The level of palmitoylation increases when platelets are activated by thrombin (in vitro). The protein exists in three forms with molecular masses between 22 and 27 kDa, and is known to carry covalently linked fatty acids. Palmitoylation by ZDHHC2 regulates CD9 expression, association with other tetraspanin family proteins and function in cell adhesion.

It localises to the cell membrane. The protein localises to the membrane. It is found in the secreted. The protein resides in the extracellular exosome. Functionally, integral membrane protein associated with integrins, which regulates different processes, such as sperm-egg fusion, platelet activation and aggregation, and cell adhesion. Present at the cell surface of oocytes and plays a key role in sperm-egg fusion, possibly by organizing multiprotein complexes and the morphology of the membrane required for the fusion. In myoblasts, associates with CD81 and PTGFRN and inhibits myotube fusion during muscle regeneration. In macrophages, associates with CD81 and beta-1 and beta-2 integrins, and prevents macrophage fusion into multinucleated giant cells specialized in ingesting complement-opsonized large particles. Also prevents the fusion between mononuclear cell progenitors into osteoclasts in charge of bone resorption. Acts as a receptor for PSG17. Involved in platelet activation and aggregation. Regulates paranodal junction formation. Involved in cell adhesion, cell motility and tumor metastasis. The chain is CD9 antigen from Chlorocebus aethiops (Green monkey).